The following is an 86-amino-acid chain: Co-chaperonin GroES (86 aa).

The protein belongs to the GroES chaperonin family. In terms of assembly, heptamer of 7 subunits arranged in a ring. Interacts with the chaperonin GroEL.

The protein resides in the cytoplasm. In terms of biological role, together with the chaperonin GroEL, plays an essential role in assisting protein folding. The GroEL-GroES system forms a nano-cage that allows encapsulation of the non-native substrate proteins and provides a physical environment optimized to promote and accelerate protein folding. GroES binds to the apical surface of the GroEL ring, thereby capping the opening of the GroEL channel. This Campylobacter concisus (strain 13826) protein is Co-chaperonin GroES.